The following is a 243-amino-acid chain: Flavin-dependent thymidylate synthase (243 aa).

The 206-residue stretch at 2–207 folds into the ThyX domain; the sequence is VKVKLINYTP…ELKPIIEWAK (206 aa). Residues serine 56, 80–82, and glutamine 88 contribute to the FAD site; that span reads RHR. DUMP-binding positions include 77–80, 88–92, and arginine 146; these read QLVR and QQSQR. The short motif at 80 to 90 is the ThyX motif element; sequence RHRIASYTQQS. FAD-binding positions include 162 to 164 and histidine 168; that span reads NLR. Arginine 173 lines the dUMP pocket. The Involved in ionization of N3 of dUMP, leading to its activation role is filled by arginine 173.

The protein belongs to the thymidylate synthase ThyX family. As to quaternary structure, homotetramer. The cofactor is FAD.

It carries out the reaction dUMP + (6R)-5,10-methylene-5,6,7,8-tetrahydrofolate + NADPH + H(+) = dTMP + (6S)-5,6,7,8-tetrahydrofolate + NADP(+). It functions in the pathway pyrimidine metabolism; dTTP biosynthesis. Functionally, catalyzes the reductive methylation of 2'-deoxyuridine-5'-monophosphate (dUMP) to 2'-deoxythymidine-5'-monophosphate (dTMP) while utilizing 5,10-methylenetetrahydrofolate (mTHF) as the methyl donor, and NADPH and FADH(2) as the reductant. The protein is Flavin-dependent thymidylate synthase of Pyrococcus horikoshii (strain ATCC 700860 / DSM 12428 / JCM 9974 / NBRC 100139 / OT-3).